Consider the following 420-residue polypeptide: Exodeoxyribonuclease 7 large subunit (420 aa).

It belongs to the XseA family. Heterooligomer composed of large and small subunits.

The protein resides in the cytoplasm. It catalyses the reaction Exonucleolytic cleavage in either 5'- to 3'- or 3'- to 5'-direction to yield nucleoside 5'-phosphates.. In terms of biological role, bidirectionally degrades single-stranded DNA into large acid-insoluble oligonucleotides, which are then degraded further into small acid-soluble oligonucleotides. The chain is Exodeoxyribonuclease 7 large subunit from Helicobacter pylori (strain Shi470).